A 26-amino-acid polypeptide reads, in one-letter code: MGIIYLILFLIVIYLLYRILDVLEQK.

Residues 3 to 23 form a helical membrane-spanning segment; sequence IIYLILFLIVIYLLYRILDVL.

It localises to the membrane. This is an uncharacterized protein from Helicobacter pylori (strain J99 / ATCC 700824) (Campylobacter pylori J99).